Consider the following 308-residue polypeptide: D-alanine--D-alanine ligase (308 aa).

In terms of domain architecture, ATP-grasp spans 104–304 (KQALVPHGIP…YAELVERIVE (201 aa)). An ATP-binding site is contributed by 131 to 187 (LPRPYVLKPVNEGSSVGVAIVRDDSNYGNPISRDALGPWQQFDRLLAEPFIKGRELT). Residues aspartate 255, glutamate 271, and asparagine 273 each contribute to the Mg(2+) site.

Belongs to the D-alanine--D-alanine ligase family. Mg(2+) serves as cofactor. The cofactor is Mn(2+).

It localises to the cytoplasm. It catalyses the reaction 2 D-alanine + ATP = D-alanyl-D-alanine + ADP + phosphate + H(+). It participates in cell wall biogenesis; peptidoglycan biosynthesis. In terms of biological role, cell wall formation. The polypeptide is D-alanine--D-alanine ligase (Sphingopyxis alaskensis (strain DSM 13593 / LMG 18877 / RB2256) (Sphingomonas alaskensis)).